Reading from the N-terminus, the 317-residue chain is Glutamyl-tRNA reductase-binding protein, chloroplastic (317 aa).

Residues 1–42 constitute a chloroplast transit peptide; the sequence is MQLQTQSFALNLLPSPNFAKPIERREFISLKRDPSRPISLRC.

Interacts with HEMA1 and forms a heterotetramer of two GLUTRBP and two HEMA1 subunits.

Its subcellular location is the plastid. The protein localises to the chloroplast stroma. Functionally, involved in the regulation of glutamyl-tRNA reductase (GluTR) which is important for the synthesis and distribution of 5-aminolevulinate, a precursor in heme and chlorophyll biosynthesis. Stimulates GluTR activity and regulates glutamate-1-semialdehyde release. May play a role in heme metabolism. Necessary for efficient photosynthetic electron transport in chloroplasts. This is Glutamyl-tRNA reductase-binding protein, chloroplastic from Arabidopsis thaliana (Mouse-ear cress).